A 646-amino-acid polypeptide reads, in one-letter code: Phosphomethylpyrimidine synthase (646 aa).

Polar residues predominate over residues 1–13 (MNIRSNPDTTRPA). The segment at 1 to 21 (MNIRSNPDTTRPAVTTGGLPS) is disordered. Substrate-binding positions include Asn221, Met250, Tyr279, His315, 335 to 337 (SRG), 376 to 379 (DGLR), and Glu415. His419 is a Zn(2+) binding site. Substrate is bound at residue Tyr442. Position 483 (His483) interacts with Zn(2+). [4Fe-4S] cluster contacts are provided by Cys563, Cys566, and Cys571.

Belongs to the ThiC family. As to quaternary structure, homodimer. It depends on [4Fe-4S] cluster as a cofactor.

It carries out the reaction 5-amino-1-(5-phospho-beta-D-ribosyl)imidazole + S-adenosyl-L-methionine = 4-amino-2-methyl-5-(phosphooxymethyl)pyrimidine + CO + 5'-deoxyadenosine + formate + L-methionine + 3 H(+). The protein operates within cofactor biosynthesis; thiamine diphosphate biosynthesis. In terms of biological role, catalyzes the synthesis of the hydroxymethylpyrimidine phosphate (HMP-P) moiety of thiamine from aminoimidazole ribotide (AIR) in a radical S-adenosyl-L-methionine (SAM)-dependent reaction. In Rhodopseudomonas palustris (strain HaA2), this protein is Phosphomethylpyrimidine synthase.